The sequence spans 375 residues: Chaperone protein DnaJ (375 aa).

Positions 5–68 (DYYEILGVSK…KKRAQYDQFG (64 aa)) constitute a J domain. The segment at 135-217 (GISKNINYDR…CYGKKVINER (83 aa)) adopts a CR-type zinc-finger fold. Zn(2+) contacts are provided by Cys148, Cys151, Cys165, Cys168, Cys191, Cys194, Cys205, and Cys208. CXXCXGXG motif repeat units lie at residues 148-155 (CHKCQGTG), 165-172 (CTKCHGRG), 191-198 (CHECEGTG), and 205-212 (CEQCYGKK).

Belongs to the DnaJ family. In terms of assembly, homodimer. Zn(2+) serves as cofactor.

The protein resides in the cytoplasm. Functionally, participates actively in the response to hyperosmotic and heat shock by preventing the aggregation of stress-denatured proteins and by disaggregating proteins, also in an autonomous, DnaK-independent fashion. Unfolded proteins bind initially to DnaJ; upon interaction with the DnaJ-bound protein, DnaK hydrolyzes its bound ATP, resulting in the formation of a stable complex. GrpE releases ADP from DnaK; ATP binding to DnaK triggers the release of the substrate protein, thus completing the reaction cycle. Several rounds of ATP-dependent interactions between DnaJ, DnaK and GrpE are required for fully efficient folding. Also involved, together with DnaK and GrpE, in the DNA replication of plasmids through activation of initiation proteins. The protein is Chaperone protein DnaJ of Ureaplasma parvum serovar 3 (strain ATCC 700970).